The following is a 397-amino-acid chain: F-box protein At5g25290 (397 aa).

The region spanning Val-11–Thr-56 is the F-box domain.

The sequence is that of F-box protein At5g25290 from Arabidopsis thaliana (Mouse-ear cress).